The chain runs to 195 residues: Imidazoleglycerol-phosphate dehydratase (195 aa).

Belongs to the imidazoleglycerol-phosphate dehydratase family.

It localises to the cytoplasm. The enzyme catalyses D-erythro-1-(imidazol-4-yl)glycerol 3-phosphate = 3-(imidazol-4-yl)-2-oxopropyl phosphate + H2O. The protein operates within amino-acid biosynthesis; L-histidine biosynthesis; L-histidine from 5-phospho-alpha-D-ribose 1-diphosphate: step 6/9. The chain is Imidazoleglycerol-phosphate dehydratase from Dechloromonas aromatica (strain RCB).